A 509-amino-acid polypeptide reads, in one-letter code: Steroid 17-alpha-hydroxylase/17,20 lyase (509 aa).

Cys440 lines the heme pocket.

The protein belongs to the cytochrome P450 family. The cofactor is heme.

It localises to the endoplasmic reticulum membrane. The protein resides in the microsome membrane. The enzyme catalyses a C21-steroid + reduced [NADPH--hemoprotein reductase] + O2 = a 17alpha-hydroxy-C21-steroid + oxidized [NADPH--hemoprotein reductase] + H2O + H(+). The catalysed reaction is progesterone + reduced [NADPH--hemoprotein reductase] + O2 = 17alpha-hydroxyprogesterone + oxidized [NADPH--hemoprotein reductase] + H2O + H(+). It catalyses the reaction pregnenolone + reduced [NADPH--hemoprotein reductase] + O2 = 17alpha-hydroxypregnenolone + oxidized [NADPH--hemoprotein reductase] + H2O + H(+). It carries out the reaction 17alpha-hydroxyprogesterone + reduced [NADPH--hemoprotein reductase] + O2 = androst-4-ene-3,17-dione + acetate + oxidized [NADPH--hemoprotein reductase] + H2O + 2 H(+). The enzyme catalyses 17alpha-hydroxyprogesterone + reduced [NADPH--hemoprotein reductase] + O2 = 16alpha,17alpha-dihydroxyprogesterone + oxidized [NADPH--hemoprotein reductase] + H2O + H(+). The catalysed reaction is 16alpha,17alpha-dihydroxyprogesterone + reduced [NADPH--hemoprotein reductase] + O2 = 6beta,16alpha,17alpha-trihydroxyprogesterone + oxidized [NADPH--hemoprotein reductase] + H2O + H(+). It catalyses the reaction 17alpha-hydroxypregnenolone + reduced [NADPH--hemoprotein reductase] + O2 = 3beta-hydroxyandrost-5-en-17-one + acetate + oxidized [NADPH--hemoprotein reductase] + H2O + 2 H(+). It carries out the reaction 16alpha,17alpha-dihydroxypregnenolone + reduced [NADPH--hemoprotein reductase] + O2 = 3beta,16alpha-dihydroxy-androst-5-en-17-one + acetate + oxidized [NADPH--hemoprotein reductase] + H2O + 2 H(+). The enzyme catalyses 3beta-hydroxyandrost-5-en-17-one + reduced [NADPH--hemoprotein reductase] + O2 = 3beta,16alpha-dihydroxy-androst-5-en-17-one + oxidized [NADPH--hemoprotein reductase] + H2O + H(+). The catalysed reaction is androst-4-ene-3,17-dione + reduced [NADPH--hemoprotein reductase] + O2 = 16alpha-hydroxyandrost-4-ene-3,17-dione + oxidized [NADPH--hemoprotein reductase] + H2O + H(+). Its pathway is steroid hormone biosynthesis. It participates in steroid biosynthesis; glucocorticoid biosynthesis. Regulated predominantly by intracellular cAMP levels. The 17,20-lyase activity is stimulated by cytochrome b5, which acts as an allosteric effector increasing the Vmax of the lyase activity. A cytochrome P450 monooxygenase involved in corticoid and androgen biosynthesis. Catalyzes 17-alpha hydroxylation of C21 steroids, which is common for both pathways. A second oxidative step, required only for androgen synthesis, involves an acyl-carbon cleavage. The 17-alpha hydroxy intermediates, as part of adrenal glucocorticoids biosynthesis pathway, are precursors of cortisol. Hydroxylates steroid hormones, pregnenolone and progesterone to form 17-alpha hydroxy metabolites, followed by the cleavage of the C17-C20 bond to form C19 steroids, dehydroepiandrosterone (DHEA) and androstenedione. Has 16-alpha hydroxylase activity. Catalyzes 16-alpha hydroxylation of 17-alpha hydroxy pregnenolone, followed by the cleavage of the C17-C20 bond to form 16-alpha-hydroxy DHEA. Also 16-alpha hydroxylates androgens, relevant for estriol synthesis. Mechanistically, uses molecular oxygen inserting one oxygen atom into a substrate, and reducing the second into a water molecule, with two electrons provided by NADPH via cytochrome P450 reductase (CPR; NADPH-ferrihemoprotein reductase). This Peromyscus leucopus (White-footed mouse) protein is Steroid 17-alpha-hydroxylase/17,20 lyase (Cyp17a1).